The chain runs to 901 residues: Schlafen family member 11 (901 aa).

Mg(2+) is bound by residues glutamate 209 and glutamate 214. Lysine 216 is an active-site residue. Histidine 285, cysteine 287, cysteine 321, and cysteine 322 together coordinate Zn(2+). Residue 599–606 participates in ATP binding; the sequence is GLPGSGKT.

The protein belongs to the Schlafen family. Subgroup III subfamily. As to quaternary structure, homodimer. Interacts with MCM3. Interacts with DHX9. Interacts with RPA1. Mg(2+) serves as cofactor. In terms of tissue distribution, exhibits a wider expression range in ovarian and colon adenocarcinoma than in their corresponding healthy tissues.

The protein resides in the nucleus. The protein localises to the chromosome. Its function is as follows. Inhibitor of DNA replication that promotes cell death in response to DNA damage. Acts as a guardian of the genome by killing cells with defective replication. Persistently blocks stressed replication forks by opening chromatin across replication initiation sites at stressed replication forks, possibly leading to unwind DNA ahead of the MCM helicase and block fork progression, ultimately leading to cell death. Upon DNA damage, inhibits translation of ATR or ATM based on distinct codon usage without disrupting early DNA damage response signaling. Antiviral restriction factor with manganese-dependent type II tRNA endoribonuclease. A single tRNA molecule is bound and cleaved by the SLFN11 dimer. Specifically abrogates the production of retroviruses such as human immunodeficiency virus 1 (HIV-1) by acting as a specific inhibitor of the synthesis of retroviruses encoded proteins in a codon-usage-dependent manner. Impairs the replication of human cytomegalovirus (HCMV) and some Flaviviruses. Exploits the unique viral codon bias towards A/T nucleotides. Also acts as an interferon (IFN)-induced antiviral protein which acts as an inhibitor of retrovirus protein synthesis. The chain is Schlafen family member 11 from Homo sapiens (Human).